The sequence spans 429 residues: Enolase (429 aa).

Gln-164 contacts (2R)-2-phosphoglycerate. Glu-206 functions as the Proton donor in the catalytic mechanism. Mg(2+)-binding residues include Asp-243, Glu-286, and Asp-313. The (2R)-2-phosphoglycerate site is built by Lys-338, Arg-367, Ser-368, and Lys-389. The active-site Proton acceptor is Lys-338.

The protein belongs to the enolase family. The cofactor is Mg(2+).

Its subcellular location is the cytoplasm. It is found in the secreted. The protein localises to the cell surface. The enzyme catalyses (2R)-2-phosphoglycerate = phosphoenolpyruvate + H2O. It participates in carbohydrate degradation; glycolysis; pyruvate from D-glyceraldehyde 3-phosphate: step 4/5. In terms of biological role, catalyzes the reversible conversion of 2-phosphoglycerate (2-PG) into phosphoenolpyruvate (PEP). It is essential for the degradation of carbohydrates via glycolysis. This is Enolase from Thermosipho melanesiensis (strain DSM 12029 / CIP 104789 / BI429).